A 150-amino-acid polypeptide reads, in one-letter code: UPF0178 protein Shewmr4_1560 (150 aa).

This sequence belongs to the UPF0178 family.

The chain is UPF0178 protein Shewmr4_1560 from Shewanella sp. (strain MR-4).